A 227-amino-acid chain; its full sequence is tRNA (guanine-N(7)-)-methyltransferase (227 aa).

S-adenosyl-L-methionine-binding residues include glutamate 58, glutamate 83, aspartate 110, and aspartate 132. Aspartate 132 is an active-site residue. Substrate contacts are provided by residues lysine 136, aspartate 168, and 205–208 (TRFE).

This sequence belongs to the class I-like SAM-binding methyltransferase superfamily. TrmB family.

It carries out the reaction guanosine(46) in tRNA + S-adenosyl-L-methionine = N(7)-methylguanosine(46) in tRNA + S-adenosyl-L-homocysteine. Its pathway is tRNA modification; N(7)-methylguanine-tRNA biosynthesis. In terms of biological role, catalyzes the formation of N(7)-methylguanine at position 46 (m7G46) in tRNA. This Acidithiobacillus ferrooxidans (strain ATCC 23270 / DSM 14882 / CIP 104768 / NCIMB 8455) (Ferrobacillus ferrooxidans (strain ATCC 23270)) protein is tRNA (guanine-N(7)-)-methyltransferase.